Here is a 105-residue protein sequence, read N- to C-terminus: Replication restart protein PriB (105 aa).

The 102-residue stretch at 1–102 folds into the SSB domain; the sequence is MTTNRLVLSG…LHAEQIELID (102 aa).

It belongs to the PriB family. As to quaternary structure, homodimer. Interacts with PriA and DnaT. Component of the replication restart primosome. Primosome assembly occurs via a 'hand-off' mechanism. PriA binds to replication forks, subsequently PriB then DnaT bind; DnaT then displaces ssDNA to generate the helicase loading substrate.

In terms of biological role, involved in the restart of stalled replication forks, which reloads the replicative helicase on sites other than the origin of replication; the PriA-PriB pathway is the major replication restart pathway. During primosome assembly it facilitates complex formation between PriA and DnaT on DNA; stabilizes PriA on DNA. Stimulates the DNA unwinding activity of PriA helicase. In Photorhabdus laumondii subsp. laumondii (strain DSM 15139 / CIP 105565 / TT01) (Photorhabdus luminescens subsp. laumondii), this protein is Replication restart protein PriB.